Reading from the N-terminus, the 182-residue chain is Troponin I, fast skeletal muscle (182 aa).

N-acetylglycine is present on Gly-2. The involved in binding TNC stretch occupies residues 2–48 (GDEEKRNRAITARRQHLKSVMLQIAATELEKEESRRESEKENYLSEH). At Thr-12 the chain carries Phosphothreonine. Residues 29 to 45 (ELEKEESRRESEKENYL) are compositionally biased toward basic and acidic residues. Residues 29–53 (ELEKEESRRESEKENYLSEHCPPLH) are disordered. The interval 97–117 (NQKLFDLRGKFKRPPLRRVRM) is involved in binding TNC and actin. Ser-118 carries the post-translational modification Phosphoserine.

The protein belongs to the troponin I family. In terms of assembly, binds to actin and tropomyosin.

In terms of biological role, troponin I is the inhibitory subunit of troponin, the thin filament regulatory complex which confers calcium-sensitivity to striated muscle actomyosin ATPase activity. This is Troponin I, fast skeletal muscle (Tnni2) from Mus musculus (Mouse).